The sequence spans 953 residues: MSKKRLHEIAKEIGKSSKEVVEHAKYLGLDVKSHASSVEEADAKKIISSFSKASKPDVTASQTVKPKEVAQPSVTVVKETGSEHAEKTQVSKPKSRNFKAEREARAKEQAARKQANGSSHRSQERRGGYRQPNNHQTNEQGDKRITHRSQGDTNDKRIERKASNVSPRHDNHQLVGDRNRSFAKENHKNGRFTNQKKQGRQEPQSKSPKIDFKARAAALKAEQNAEYSRQSETRFRAQQEAKRLAELARQEAKEAALKAQAEEMSHREAALKSIEEAETKLKSSNISAKSTADNRRKKQARPEKNRELTHHSQEGQKKNKKSWNSQNQVRNQKNSNWNKNKKTKKGKNVKNTNTAPKPVTERKFHELPKEFEYTEGMTVAEIAKRIKREPAEIVKKLFMMGVMATQNQSLDGDTIELLMVDYGIEAKAKVEVDDADIERFFEDENYLNPENIVERAPVVTIMGHVDHGKTTLLDTLRNSRVATGEAGGITQHIGAYQIEEAGKKITFLDTPGHAAFTSMRARGASVTDITILIVAADDGVMPQTIEAINHSKAAGVPIIVAINKIDKPGANPERVIAELAEYGIISTAWGGDSEFVEISAKFNKNIDELLETVLLVAEVEELKADPTVRAIGTVIEARLDKGKGAIATLLVQQGTLHVQDPIVVGNTFGRVRAMVNDLGRRVKSAEPSTPVSITGLNETPMAGDHFAVYADEKAARAAGEERSKRALLKQRQNTQRVSLDNLFDTLKAGEIKTVNVIIKADVQGSVEALAASLVKIDVEGVRVNVVHSAVGAINESDVTLAEASNAVIIGFNVRPTPQARQQADTDDVEIRLHSIIYKVIEEVEEAMKGKLDPVYQEKILGEAIIRETFKVSKVGTIGGFMVINGKVTRDSSVRVIRDSVVIFDGKLASLKHYKDDVKEVGNAQEGGLMIENFNDLKVDDTIEAYIMEEIVRK.

2 disordered regions span residues 48–248 and 279–363; these read SSFS…AELA and TKLK…TERK. 3 stretches are compositionally biased toward basic and acidic residues: residues 80–89, 98–111, and 140–188; these read TGSEHAEKTQ, FKAE…EQAA, and QGDK…ENHK. The segment covering 191–207 has biased composition (polar residues); it reads RFTNQKKQGRQEPQSKS. Over residues 229 to 248 the composition is skewed to basic and acidic residues; that stretch reads RQSETRFRAQQEAKRLAELA. Residues 282 to 291 show a composition bias toward polar residues; it reads KSSNISAKST. Basic and acidic residues predominate over residues 300–317; it reads ARPEKNRELTHHSQEGQK. The span at 322-338 shows a compositional bias: low complexity; the sequence is SWNSQNQVRNQKNSNWN. Basic residues predominate over residues 339–348; sequence KNKKTKKGKN. Positions 454 to 623 constitute a tr-type G domain; the sequence is ERAPVVTIMG…LLVAEVEELK (170 aa). Positions 463–470 are G1; sequence GHVDHGKT. Residue 463–470 participates in GTP binding; the sequence is GHVDHGKT. Residues 488 to 492 form a G2 region; that stretch reads GITQH. The interval 509 to 512 is G3; sequence DTPG. GTP contacts are provided by residues 509-513 and 563-566; these read DTPGH and NKID. The tract at residues 563 to 566 is G4; the sequence is NKID. A G5 region spans residues 599–601; it reads SAK.

This sequence belongs to the TRAFAC class translation factor GTPase superfamily. Classic translation factor GTPase family. IF-2 subfamily.

The protein localises to the cytoplasm. One of the essential components for the initiation of protein synthesis. Protects formylmethionyl-tRNA from spontaneous hydrolysis and promotes its binding to the 30S ribosomal subunits. Also involved in the hydrolysis of GTP during the formation of the 70S ribosomal complex. This chain is Translation initiation factor IF-2, found in Streptococcus pyogenes serotype M18 (strain MGAS8232).